Here is a 291-residue protein sequence, read N- to C-terminus: N-acetylmannosamine kinase (291 aa).

Residues 5–12 and 132–139 contribute to the ATP site; these read AIDIGGTK and GVGGGVVC. His156, Cys166, Cys168, and Cys173 together coordinate Zn(2+).

This sequence belongs to the ROK (NagC/XylR) family. NanK subfamily. Homodimer.

The enzyme catalyses an N-acyl-D-mannosamine + ATP = an N-acyl-D-mannosamine 6-phosphate + ADP + H(+). The protein operates within amino-sugar metabolism; N-acetylneuraminate degradation; D-fructose 6-phosphate from N-acetylneuraminate: step 2/5. Its function is as follows. Catalyzes the phosphorylation of N-acetylmannosamine (ManNAc) to ManNAc-6-P. The protein is N-acetylmannosamine kinase of Salmonella dublin (strain CT_02021853).